Reading from the N-terminus, the 429-residue chain is Tol-Pal system protein TolB (429 aa).

The signal sequence occupies residues 1–22; that stretch reads MTRRLFILITIMLCLIPALLHS. Disordered regions lie at residues 362 to 383 and 407 to 429; these read PDGT…RWSP and GSGQ…SPRW. A compositionally biased stretch (polar residues) spans 363 to 374; that stretch reads DGTNDTRLTSEG.

The protein belongs to the TolB family. As to quaternary structure, the Tol-Pal system is composed of five core proteins: the inner membrane proteins TolA, TolQ and TolR, the periplasmic protein TolB and the outer membrane protein Pal. They form a network linking the inner and outer membranes and the peptidoglycan layer.

The protein resides in the periplasm. Part of the Tol-Pal system, which plays a role in outer membrane invagination during cell division and is important for maintaining outer membrane integrity. The chain is Tol-Pal system protein TolB from Geobacter metallireducens (strain ATCC 53774 / DSM 7210 / GS-15).